Reading from the N-terminus, the 840-residue chain is Heat shock 70 kDa protein 4 (840 aa).

Lys53 is modified (N6-acetyllysine). Phosphoserine is present on Ser76. Tyr89 and Tyr336 each carry phosphotyrosine. Ser393 and Ser415 each carry phosphoserine. The residue at position 430 (Lys430) is an N6-acetyllysine. Residues 500 to 575 (VHKSEESEEP…QAKKAKVKTS (76 aa)) form a disordered region. Positions 514–533 (QNAKEEEKMQVDQEEPHTEE) are enriched in basic and acidic residues. Thr538 carries the phosphothreonine modification. Ser546 carries the phosphoserine modification. Residue Tyr660 is modified to Phosphotyrosine. Residue Ser756 is modified to Phosphoserine. Lys773 is modified (N6-methyllysine). Positions 781-840 (PIISKPKPKVEPPKEEPKHAEQNGPVDGQGDNPGTQAAEHGADTAVPSDGDKKLPEMDID) are disordered. 2 stretches are compositionally biased toward basic and acidic residues: residues 788–801 (PKVEPPKEEPKHAE) and 829–840 (DGDKKLPEMDID).

It belongs to the heat shock protein 70 family. As to quaternary structure, interacts with TJP1/ZO-1. Ubiquitous. Highly expressed in testis.

The protein localises to the cytoplasm. This Rattus norvegicus (Rat) protein is Heat shock 70 kDa protein 4 (Hspa4).